Reading from the N-terminus, the 938-residue chain is Isoleucine--tRNA ligase (938 aa).

Positions 58–68 (PYANGSIHIGH) match the 'HIGH' region motif. Position 561 (glutamate 561) interacts with L-isoleucyl-5'-AMP. The short motif at 602–606 (KMSKS) is the 'KMSKS' region element. An ATP-binding site is contributed by lysine 605. Cysteine 901, cysteine 904, cysteine 921, and cysteine 924 together coordinate Zn(2+).

This sequence belongs to the class-I aminoacyl-tRNA synthetase family. IleS type 1 subfamily. In terms of assembly, monomer. It depends on Zn(2+) as a cofactor.

Its subcellular location is the cytoplasm. The enzyme catalyses tRNA(Ile) + L-isoleucine + ATP = L-isoleucyl-tRNA(Ile) + AMP + diphosphate. Catalyzes the attachment of isoleucine to tRNA(Ile). As IleRS can inadvertently accommodate and process structurally similar amino acids such as valine, to avoid such errors it has two additional distinct tRNA(Ile)-dependent editing activities. One activity is designated as 'pretransfer' editing and involves the hydrolysis of activated Val-AMP. The other activity is designated 'posttransfer' editing and involves deacylation of mischarged Val-tRNA(Ile). The sequence is that of Isoleucine--tRNA ligase from Cronobacter sakazakii (strain ATCC BAA-894) (Enterobacter sakazakii).